We begin with the raw amino-acid sequence, 843 residues long: Urease (843 aa).

Residues 400 to 843 (GGIDCHVHFI…VPLSRNYFLF (444 aa)) form the Urease domain. Positions 405, 407, and 488 each coordinate Ni(2+). K488 carries the post-translational modification N6-carboxylysine. H490 is a binding site for substrate. H517 and H543 together coordinate Ni(2+). H591 (proton donor) is an active-site residue. D631 serves as a coordination point for Ni(2+).

The protein in the C-terminal section; belongs to the metallo-dependent hydrolases superfamily. Urease alpha subunit family. In terms of assembly, homohexamer. Other oligomeric forms may exist depending on pH and presence of salts. It depends on Ni(2+) as a cofactor. In terms of processing, carboxylation allows a single lysine to coordinate two nickel ions.

It catalyses the reaction urea + 2 H2O + H(+) = hydrogencarbonate + 2 NH4(+). It participates in nitrogen metabolism; urea degradation; CO(2) and NH(3) from urea (urease route): step 1/1. Urea hydrolase involved in nitrogen recycling from ureide, purine, and arginine catabolism. This Oryza sativa subsp. indica (Rice) protein is Urease.